The sequence spans 57 residues: Benzylsuccinate synthase gamma subunit (57 aa).

As to quaternary structure, heterohexamer composed of 2 alpha subunits, 2 beta subunits and 2 gamma subunits.

The catalysed reaction is toluene + fumarate = 2-benzylsuccinate. Its pathway is xenobiotic degradation; toluene degradation. Its activity is regulated as follows. Activated by the benzylsuccinate synthase activating enzyme BssD. Rapidly inactivated by oxygen. In terms of biological role, catalyzes the addition of fumarate to the methyl group of toluene, leading to the formation of benzylsuccinate. The sequence is that of Benzylsuccinate synthase gamma subunit (bssC) from Thauera aromatica.